A 376-amino-acid chain; its full sequence is PqqA peptide cyclase (376 aa).

Residues valine 4–aspartate 219 form the Radical SAM core domain. The [4Fe-4S] cluster site is built by cysteine 18, cysteine 22, and cysteine 25.

It belongs to the radical SAM superfamily. PqqE family. As to quaternary structure, interacts with PqqD. The interaction is necessary for activity of PqqE. Requires [4Fe-4S] cluster as cofactor.

The catalysed reaction is [PQQ precursor protein] + S-adenosyl-L-methionine = E-Y cross-linked-[PQQ precursor protein] + 5'-deoxyadenosine + L-methionine + H(+). It participates in cofactor biosynthesis; pyrroloquinoline quinone biosynthesis. Its function is as follows. Catalyzes the cross-linking of a glutamate residue and a tyrosine residue in the PqqA protein as part of the biosynthesis of pyrroloquinoline quinone (PQQ). The chain is PqqA peptide cyclase from Xanthomonas campestris pv. campestris (strain B100).